The following is a 179-amino-acid chain: Large ribosomal subunit protein bL17 (179 aa).

Residues 123-161 (KEKDTKKKDDSKKSDDKKTSKKEAGFKSSKGESEHKKNT) show a composition bias toward basic and acidic residues. Residues 123-179 (KEKDTKKKDDSKKSDDKKTSKKEAGFKSSKGESEHKKNTDQVVDSSSNRRYNRVKGS) form a disordered region. Polar residues predominate over residues 162–171 (DQVVDSSSNR).

The protein belongs to the bacterial ribosomal protein bL17 family. As to quaternary structure, part of the 50S ribosomal subunit. Contacts protein L32.

This chain is Large ribosomal subunit protein bL17, found in Treponema denticola (strain ATCC 35405 / DSM 14222 / CIP 103919 / JCM 8153 / KCTC 15104).